The following is a 149-amino-acid chain: Lipoprotein signal peptidase (149 aa).

2 consecutive transmembrane segments (helical) span residues 58 to 78 (WFFI…LIRL) and 85 to 105 (ASLA…DRAM). Catalysis depends on residues aspartate 111 and aspartate 127. The chain crosses the membrane as a helical span at residues 122-142 (IFNVADMAITIGVGILLLDVF).

It belongs to the peptidase A8 family.

It is found in the cell membrane. The catalysed reaction is Release of signal peptides from bacterial membrane prolipoproteins. Hydrolyzes -Xaa-Yaa-Zaa-|-(S,diacylglyceryl)Cys-, in which Xaa is hydrophobic (preferably Leu), and Yaa (Ala or Ser) and Zaa (Gly or Ala) have small, neutral side chains.. It functions in the pathway protein modification; lipoprotein biosynthesis (signal peptide cleavage). In terms of biological role, this protein specifically catalyzes the removal of signal peptides from prolipoproteins. The chain is Lipoprotein signal peptidase from Brevibacillus brevis (strain 47 / JCM 6285 / NBRC 100599).